The chain runs to 73 residues: Crustacean hyperglycemic hormone (73 aa).

3 cysteine pairs are disulfide-bonded: Cys7–Cys43, Cys23–Cys39, and Cys26–Cys52. Val73 is modified (valine amide).

This sequence belongs to the arthropod CHH/MIH/GIH/VIH hormone family. In terms of tissue distribution, produced by the medulla terminalis X-organ in the eyestalks and transported to the sinus gland where they are stored and released.

Its subcellular location is the secreted. Its function is as follows. Hormone found in the sinus gland of isopods and decapods which controls the blood sugar level. Has a secretagogue action over the amylase released from the midgut gland. May act as a stress hormone and may be involved in the control of molting and reproduction. This Jasus lalandii (Cape rock lobster) protein is Crustacean hyperglycemic hormone.